A 296-amino-acid polypeptide reads, in one-letter code: MERALNLAEEDLFHKSLSASAKRMESAFRPPQGLDLSQPGDRSPLHCYDGPDPSDLLRHHQHHHQASSGALGAAGANEALALAAANMCAKFGESAGRVSVAESSGGEEQSPDDDSDGRCELVLRSAEHRAQAGLKVDAPCATGGGKKSKEQRTLRLNINARERRRMHDLNDALDELRAVIPYAHSPSVRKLSKIATLLLAKNYILMQAQALEEMRRLVAYLNQGQAISAASIPNPAAAAAAAAAVALHPALGAYEPAAAVGYPFSTGLPTATSCPDKCALFNNISSSLCKQCTDKP.

The interval 26-70 is disordered; the sequence is SAFRPPQGLDLSQPGDRSPLHCYDGPDPSDLLRHHQHHHQASSGA. A bHLH domain is found at 153-207; it reads TLRLNINARERRRMHDLNDALDELRAVIPYAHSPSVRKLSKIATLLLAKNYILMQ.

It is found in the nucleus. Functionally, may act as a transcriptional repressor. The polypeptide is Class E basic helix-loop-helix protein 22 (bhlhe22) (Xenopus tropicalis (Western clawed frog)).